The following is a 224-amino-acid chain: Urease accessory protein UreF (224 aa).

This sequence belongs to the UreF family. As to quaternary structure, ureD, UreF and UreG form a complex that acts as a GTP-hydrolysis-dependent molecular chaperone, activating the urease apoprotein by helping to assemble the nickel containing metallocenter of UreC. The UreE protein probably delivers the nickel.

It is found in the cytoplasm. Required for maturation of urease via the functional incorporation of the urease nickel metallocenter. This Klebsiella pneumoniae (strain 342) protein is Urease accessory protein UreF.